Here is a 356-residue protein sequence, read N- to C-terminus: UDP-N-acetylglucosamine--N-acetylmuramyl-(pentapeptide) pyrophosphoryl-undecaprenol N-acetylglucosamine transferase (356 aa).

Residues 12 to 14 (TGG), Asn-124, Arg-163, Ser-188, Ile-242, and Gln-287 contribute to the UDP-N-acetyl-alpha-D-glucosamine site.

The protein belongs to the glycosyltransferase 28 family. MurG subfamily.

The protein resides in the cell inner membrane. It carries out the reaction di-trans,octa-cis-undecaprenyl diphospho-N-acetyl-alpha-D-muramoyl-L-alanyl-D-glutamyl-meso-2,6-diaminopimeloyl-D-alanyl-D-alanine + UDP-N-acetyl-alpha-D-glucosamine = di-trans,octa-cis-undecaprenyl diphospho-[N-acetyl-alpha-D-glucosaminyl-(1-&gt;4)]-N-acetyl-alpha-D-muramoyl-L-alanyl-D-glutamyl-meso-2,6-diaminopimeloyl-D-alanyl-D-alanine + UDP + H(+). It functions in the pathway cell wall biogenesis; peptidoglycan biosynthesis. Its function is as follows. Cell wall formation. Catalyzes the transfer of a GlcNAc subunit on undecaprenyl-pyrophosphoryl-MurNAc-pentapeptide (lipid intermediate I) to form undecaprenyl-pyrophosphoryl-MurNAc-(pentapeptide)GlcNAc (lipid intermediate II). This chain is UDP-N-acetylglucosamine--N-acetylmuramyl-(pentapeptide) pyrophosphoryl-undecaprenol N-acetylglucosamine transferase, found in Pseudomonas syringae pv. syringae (strain B728a).